We begin with the raw amino-acid sequence, 127 residues long: Aspartate 1-decarboxylase (127 aa).

The Schiff-base intermediate with substrate; via pyruvic acid role is filled by Ser25. Ser25 bears the Pyruvic acid (Ser) mark. Thr57 contributes to the substrate binding site. Tyr58 functions as the Proton donor in the catalytic mechanism. Residue 73 to 75 (GAA) coordinates substrate.

This sequence belongs to the PanD family. Heterooctamer of four alpha and four beta subunits. Requires pyruvate as cofactor. Is synthesized initially as an inactive proenzyme, which is activated by self-cleavage at a specific serine bond to produce a beta-subunit with a hydroxyl group at its C-terminus and an alpha-subunit with a pyruvoyl group at its N-terminus.

The protein localises to the cytoplasm. It carries out the reaction L-aspartate + H(+) = beta-alanine + CO2. It functions in the pathway cofactor biosynthesis; (R)-pantothenate biosynthesis; beta-alanine from L-aspartate: step 1/1. Functionally, catalyzes the pyruvoyl-dependent decarboxylation of aspartate to produce beta-alanine. This Neisseria gonorrhoeae (strain ATCC 700825 / FA 1090) protein is Aspartate 1-decarboxylase.